The following is a 232-amino-acid chain: Ribose-5-phosphate isomerase A (232 aa).

Residues 28–31 (TGST), 83–86 (DGAD), and 96–99 (KGGG) contribute to the substrate site. Glu105 serves as the catalytic Proton acceptor. A substrate-binding site is contributed by Lys123.

Belongs to the ribose 5-phosphate isomerase family. As to quaternary structure, homodimer.

It catalyses the reaction aldehydo-D-ribose 5-phosphate = D-ribulose 5-phosphate. Its pathway is carbohydrate degradation; pentose phosphate pathway; D-ribose 5-phosphate from D-ribulose 5-phosphate (non-oxidative stage): step 1/1. In terms of biological role, catalyzes the reversible conversion of ribose-5-phosphate to ribulose 5-phosphate. In Rhodopseudomonas palustris (strain BisB18), this protein is Ribose-5-phosphate isomerase A.